Consider the following 643-residue polypeptide: Threonine--tRNA ligase 1 (643 aa).

The 62-residue stretch at 3–64 (DMVKITFPDG…NEDGTVEIIT (62 aa)) folds into the TGS domain. The interval 245–542 (DHRKLGKELK…LIEEHKGALP (298 aa)) is catalytic. Residues Cys-338, His-389, and His-519 each contribute to the Zn(2+) site.

Belongs to the class-II aminoacyl-tRNA synthetase family. Homodimer. Requires Zn(2+) as cofactor.

It is found in the cytoplasm. It carries out the reaction tRNA(Thr) + L-threonine + ATP = L-threonyl-tRNA(Thr) + AMP + diphosphate + H(+). Its function is as follows. Catalyzes the attachment of threonine to tRNA(Thr) in a two-step reaction: L-threonine is first activated by ATP to form Thr-AMP and then transferred to the acceptor end of tRNA(Thr). Also edits incorrectly charged L-seryl-tRNA(Thr). This chain is Threonine--tRNA ligase 1 (thrS), found in Bacillus subtilis (strain 168).